A 198-amino-acid chain; its full sequence is Cell division protein SepF (198 aa).

The interval 170–198 (EVPQPPARPARPASTNPPAWGNETNRMAQ) is disordered. Positions 179 to 188 (ARPASTNPPA) are enriched in low complexity.

Belongs to the SepF family. Homodimer. Interacts with FtsZ.

It is found in the cytoplasm. Functionally, cell division protein that is part of the divisome complex and is recruited early to the Z-ring. Probably stimulates Z-ring formation, perhaps through the cross-linking of FtsZ protofilaments. Its function overlaps with FtsA. The polypeptide is Cell division protein SepF (Trichormus variabilis (strain ATCC 29413 / PCC 7937) (Anabaena variabilis)).